Here is a 246-residue protein sequence, read N- to C-terminus: Small ribosomal subunit protein uS2 (246 aa).

Belongs to the universal ribosomal protein uS2 family. As to quaternary structure, component of the small ribosomal subunit. Mature ribosomes consist of a small (40S) and a large (60S) subunit. The 40S subunit contains about 33 different proteins and 1 molecule of RNA (18S). The 60S subunit contains about 49 different proteins and 3 molecules of RNA (25S, 5.8S and 5S). Interacts with ribosomal protein S21.

It localises to the cytoplasm. In terms of biological role, required for the assembly and/or stability of the 40S ribosomal subunit. Required for the processing of the 20S rRNA-precursor to mature 18S rRNA in a late step of the maturation of 40S ribosomal subunits. In Leishmania infantum, this protein is Small ribosomal subunit protein uS2.